A 321-amino-acid polypeptide reads, in one-letter code: Anthranilate phosphoribosyltransferase (321 aa).

Residues Gly72, 75–76 (GD), Thr80, 82–85 (NVST), 99–107 (KHGNVSITS), and Ser111 each bind 5-phospho-alpha-D-ribose 1-diphosphate. Gly72 serves as a coordination point for anthranilate. Ser84 contributes to the Mg(2+) binding site. Asn102 is an anthranilate binding site. Arg157 is an anthranilate binding site. Residues Asp216 and Glu217 each coordinate Mg(2+).

The protein belongs to the anthranilate phosphoribosyltransferase family. In terms of assembly, homodimer. Mg(2+) is required as a cofactor.

It carries out the reaction N-(5-phospho-beta-D-ribosyl)anthranilate + diphosphate = 5-phospho-alpha-D-ribose 1-diphosphate + anthranilate. Its pathway is amino-acid biosynthesis; L-tryptophan biosynthesis; L-tryptophan from chorismate: step 2/5. In terms of biological role, catalyzes the transfer of the phosphoribosyl group of 5-phosphorylribose-1-pyrophosphate (PRPP) to anthranilate to yield N-(5'-phosphoribosyl)-anthranilate (PRA). The protein is Anthranilate phosphoribosyltransferase of Methanococcus maripaludis (strain C6 / ATCC BAA-1332).